A 161-amino-acid polypeptide reads, in one-letter code: Urease accessory protein UreE (161 aa).

The protein belongs to the UreE family.

It is found in the cytoplasm. Involved in urease metallocenter assembly. Binds nickel. Probably functions as a nickel donor during metallocenter assembly. The sequence is that of Urease accessory protein UreE from Arthrobacter sp. (strain FB24).